The primary structure comprises 344 residues: MALPVALQNDKENLRTLVVGGGSWGTALAILLARNRVPTLLWARDLAQVSAMIITRRNDRYLPQVPFPPSLEPITDLEGALSQTKQVLVAVPSCGFRPILERLAGHLSSHVPLIWATKGLEPGTGRLLHEVVLELLGSGWPMAVMSGPTFAHEVVAGLPTAVTVAATESEIATCFARSLHGDTFRVYTSDDLIGVQLGGAVKNVLAIAAGISDGLGFGANTRAALITRGLTELVRFALAWGGQRETLMGLSGLGDLVLTCTDDQSRNRRLGLALAQGKRLDEALTLIGQAVEGAAAAKVVVARAKQLAVEMPIAEQVYQVLYAGRHPRQAVEVLCRREQKPEYA.

Residues serine 23, tryptophan 24, arginine 44, and lysine 118 each coordinate NADPH. The sn-glycerol 3-phosphate site is built by lysine 118, glycine 147, and threonine 149. An NADPH-binding site is contributed by alanine 151. Positions 202, 255, 265, 266, and 267 each coordinate sn-glycerol 3-phosphate. Lysine 202 functions as the Proton acceptor in the catalytic mechanism. Residue arginine 266 participates in NADPH binding. Glutamate 292 provides a ligand contact to NADPH.

The protein belongs to the NAD-dependent glycerol-3-phosphate dehydrogenase family.

The protein resides in the cytoplasm. The enzyme catalyses sn-glycerol 3-phosphate + NAD(+) = dihydroxyacetone phosphate + NADH + H(+). The catalysed reaction is sn-glycerol 3-phosphate + NADP(+) = dihydroxyacetone phosphate + NADPH + H(+). Its pathway is membrane lipid metabolism; glycerophospholipid metabolism. Its function is as follows. Catalyzes the reduction of the glycolytic intermediate dihydroxyacetone phosphate (DHAP) to sn-glycerol 3-phosphate (G3P), the key precursor for phospholipid synthesis. The protein is Glycerol-3-phosphate dehydrogenase [NAD(P)+] of Nitrosococcus oceani (strain ATCC 19707 / BCRC 17464 / JCM 30415 / NCIMB 11848 / C-107).